Here is a 337-residue protein sequence, read N- to C-terminus: Alanine racemase (337 aa).

The Proton acceptor; specific for D-alanine role is filled by K33. The residue at position 33 (K33) is an N6-(pyridoxal phosphate)lysine. Position 118 (R118) interacts with substrate. The active-site Proton acceptor; specific for L-alanine is the Y246. M292 contributes to the substrate binding site.

The protein belongs to the alanine racemase family. Pyridoxal 5'-phosphate serves as cofactor.

The enzyme catalyses L-alanine = D-alanine. Its pathway is amino-acid biosynthesis; D-alanine biosynthesis; D-alanine from L-alanine: step 1/1. Functionally, catalyzes the interconversion of L-alanine and D-alanine. May also act on other amino acids. This is Alanine racemase (alr) from Campylobacter curvus (strain 525.92).